The primary structure comprises 508 residues: Cobyric acid synthase (508 aa).

One can recognise a GATase cobBQ-type domain in the interval 266–464 (SLRIAVVAYP…AHGLFESTEV (199 aa)). Catalysis depends on cysteine 347, which acts as the Nucleophile. Histidine 456 is an active-site residue.

This sequence belongs to the CobB/CobQ family. CobQ subfamily.

It participates in cofactor biosynthesis; adenosylcobalamin biosynthesis. Catalyzes amidations at positions B, D, E, and G on adenosylcobyrinic A,C-diamide. NH(2) groups are provided by glutamine, and one molecule of ATP is hydrogenolyzed for each amidation. The polypeptide is Cobyric acid synthase (Methylibium petroleiphilum (strain ATCC BAA-1232 / LMG 22953 / PM1)).